Reading from the N-terminus, the 41-residue chain is uncharacterized protein (41 aa).

A disordered region spans residues 19 to 41 (NSTRNSSSSSRSSYSSRTTVFSL).

This is an uncharacterized protein from Dictyostelium discoideum (Social amoeba).